A 71-amino-acid polypeptide reads, in one-letter code: Small ribosomal subunit protein bS18 (71 aa).

This sequence belongs to the bacterial ribosomal protein bS18 family. Part of the 30S ribosomal subunit. Forms a tight heterodimer with protein bS6.

Functionally, binds as a heterodimer with protein bS6 to the central domain of the 16S rRNA, where it helps stabilize the platform of the 30S subunit. This is Small ribosomal subunit protein bS18 from Synechococcus sp. (strain JA-2-3B'a(2-13)) (Cyanobacteria bacterium Yellowstone B-Prime).